The following is a 283-amino-acid chain: Glutamate racemase (283 aa).

Residues 7–8 and 39–40 each bind substrate; these read DS and YG. The Proton donor/acceptor role is filled by Cys70. 71 to 72 contacts substrate; it reads NT. Cys206 functions as the Proton donor/acceptor in the catalytic mechanism. Residue 207–208 participates in substrate binding; that stretch reads TH.

The protein belongs to the aspartate/glutamate racemases family.

It carries out the reaction L-glutamate = D-glutamate. It participates in cell wall biogenesis; peptidoglycan biosynthesis. Provides the (R)-glutamate required for cell wall biosynthesis. The sequence is that of Glutamate racemase from Caulobacter sp. (strain K31).